Here is a 609-residue protein sequence, read N- to C-terminus: Aspartate--tRNA(Asp/Asn) ligase (609 aa).

E177 contacts L-aspartate. The tract at residues 201–204 (QLFK) is aspartate. L-aspartate is bound at residue R223. ATP-binding positions include 223–225 (RDE) and Q232. Position 461 (H461) interacts with L-aspartate. Residue E499 participates in ATP binding. Residue R506 coordinates L-aspartate. An ATP-binding site is contributed by 551 to 554 (GVDR).

This sequence belongs to the class-II aminoacyl-tRNA synthetase family. Type 1 subfamily. As to quaternary structure, homodimer.

The protein resides in the cytoplasm. The catalysed reaction is tRNA(Asx) + L-aspartate + ATP = L-aspartyl-tRNA(Asx) + AMP + diphosphate. Aspartyl-tRNA synthetase with relaxed tRNA specificity since it is able to aspartylate not only its cognate tRNA(Asp) but also tRNA(Asn). Reaction proceeds in two steps: L-aspartate is first activated by ATP to form Asp-AMP and then transferred to the acceptor end of tRNA(Asp/Asn). The polypeptide is Aspartate--tRNA(Asp/Asn) ligase (Synechococcus sp. (strain CC9605)).